Consider the following 418-residue polypeptide: Serine hydroxymethyltransferase (418 aa).

(6S)-5,6,7,8-tetrahydrofolate is bound by residues L120 and 124-126; that span reads GHL. N6-(pyridoxal phosphate)lysine is present on K229.

It belongs to the SHMT family. Homodimer. Requires pyridoxal 5'-phosphate as cofactor.

Its subcellular location is the cytoplasm. It catalyses the reaction (6R)-5,10-methylene-5,6,7,8-tetrahydrofolate + glycine + H2O = (6S)-5,6,7,8-tetrahydrofolate + L-serine. It functions in the pathway one-carbon metabolism; tetrahydrofolate interconversion. Its pathway is amino-acid biosynthesis; glycine biosynthesis; glycine from L-serine: step 1/1. Catalyzes the reversible interconversion of serine and glycine with tetrahydrofolate (THF) serving as the one-carbon carrier. This reaction serves as the major source of one-carbon groups required for the biosynthesis of purines, thymidylate, methionine, and other important biomolecules. Also exhibits THF-independent aldolase activity toward beta-hydroxyamino acids, producing glycine and aldehydes, via a retro-aldol mechanism. The chain is Serine hydroxymethyltransferase from Myxococcus xanthus (strain DK1622).